An 88-amino-acid polypeptide reads, in one-letter code: Small ribosomal subunit protein bS16 (88 aa).

This sequence belongs to the bacterial ribosomal protein bS16 family.

The sequence is that of Small ribosomal subunit protein bS16 from Mesomycoplasma hyopneumoniae (strain 232) (Mycoplasma hyopneumoniae).